An 89-amino-acid chain; its full sequence is LYR motif-containing protein 4 (89 aa).

It belongs to the complex I LYR family.

It localises to the mitochondrion. It is found in the nucleus. Its pathway is cofactor biosynthesis; iron-sulfur cluster biosynthesis. Its function is as follows. Required for nuclear and mitochondrial iron-sulfur protein biosynthesis. The protein is LYR motif-containing protein 4 (lyrm4) of Danio rerio (Zebrafish).